The following is a 241-amino-acid chain: Small ribosomal subunit protein uS3c (241 aa).

Belongs to the universal ribosomal protein uS3 family. In terms of assembly, part of the 30S ribosomal subunit.

Its subcellular location is the plastid. In Helicosporidium sp. subsp. Simulium jonesii (Green alga), this protein is Small ribosomal subunit protein uS3c (rps3).